A 404-amino-acid chain; its full sequence is Chorismate synthase (404 aa).

Arginine 47 provides a ligand contact to NADP(+). FMN contacts are provided by residues 156-158 (RSS), 281-282 (NA), glycine 321, 336-340 (KPTST), and arginine 363.

This sequence belongs to the chorismate synthase family. As to quaternary structure, homotetramer. FMNH2 is required as a cofactor.

It catalyses the reaction 5-O-(1-carboxyvinyl)-3-phosphoshikimate = chorismate + phosphate. The protein operates within metabolic intermediate biosynthesis; chorismate biosynthesis; chorismate from D-erythrose 4-phosphate and phosphoenolpyruvate: step 7/7. In terms of biological role, catalyzes the anti-1,4-elimination of the C-3 phosphate and the C-6 proR hydrogen from 5-enolpyruvylshikimate-3-phosphate (EPSP) to yield chorismate, which is the branch point compound that serves as the starting substrate for the three terminal pathways of aromatic amino acid biosynthesis. This reaction introduces a second double bond into the aromatic ring system. The protein is Chorismate synthase of Rhodopirellula baltica (strain DSM 10527 / NCIMB 13988 / SH1).